The sequence spans 218 residues: Thiopurine S-methyltransferase (218 aa).

Positions 10, 45, 66, and 123 each coordinate S-adenosyl-L-methionine.

The protein belongs to the class I-like SAM-binding methyltransferase superfamily. TPMT family.

The protein resides in the cytoplasm. It catalyses the reaction S-adenosyl-L-methionine + a thiopurine = S-adenosyl-L-homocysteine + a thiopurine S-methylether.. The polypeptide is Thiopurine S-methyltransferase (Xanthomonas axonopodis pv. citri (strain 306)).